Here is a 1597-residue protein sequence, read N- to C-terminus: Mitogen-activated protein kinase kinase kinase 4 (1597 aa).

Disordered regions lie at residues 1 to 128 (MRDA…VETV) and 424 to 465 (SPRP…PRVP). Residues 59–69 (SDPEDFSDETN) are compositionally biased toward acidic residues. Phosphoserine is present on S77. Residues 84–94 (QMKRLSAKHQR) are compositionally biased toward basic residues. The residue at position 424 (S424) is a Phosphoserine. Phosphothreonine is present on T440. The residue at position 449 (S449) is a Phosphoserine. The segment covering 449 to 458 (SGTEESDEEP) has biased composition (acidic residues). A Phosphothreonine modification is found at T451. 2 positions are modified to phosphoserine: S454 and S492. 3 disordered regions span residues 1137-1157 (RPVKVPRCHSDPPNPHLIIPT), 1190-1220 (AAGRPGPGGGDSVPAKPVNTAPDTRGSSVPE), and 1233-1263 (FRSLSRHSSPTEERDEPAYPRSDSSGSTRRS). The segment covering 1210–1219 (APDTRGSSVP) has biased composition (polar residues). Phosphoserine occurs at positions 1241 and 1263. Residues 1241 to 1250 (SPTEERDEPA) are compositionally biased toward basic and acidic residues. Residues 1332 to 1590 (WQRGNKIGEG…ASQLLDHAFV (259 aa)) form the Protein kinase domain. ATP is bound by residues 1338-1346 (IGEGQYGKV) and K1361. The Proton acceptor role is filled by D1452.

It belongs to the protein kinase superfamily. STE Ser/Thr protein kinase family. MAP kinase kinase kinase subfamily. Monomer and homodimer. Homodimerization enhances kinase activity. Interacts with CDC42. Interacts with TRAF4; this promotes homodimerization. Binds both upstream activators and downstream substrates in multimolecular complexes. Interacts with AXIN1 and DIXDC1; interaction with DIXDC1 prevents interaction with AXIN1. Interacts with GADD45 and MAP2K6. Interacts with ZFP36; this interaction enhances the association with SH3KBP1/CIN85. Interacts with SH3KBP1; this interaction enhances the association with ZFP36. The cofactor is Mg(2+). In terms of tissue distribution, widely expressed. High expression was found in skeletal muscle, kidney, testis followed by heart brain and lung. Low expression was found in spleen.

It is found in the cytoplasm. The protein resides in the perinuclear region. It catalyses the reaction L-seryl-[protein] + ATP = O-phospho-L-seryl-[protein] + ADP + H(+). It carries out the reaction L-threonyl-[protein] + ATP = O-phospho-L-threonyl-[protein] + ADP + H(+). Its activity is regulated as follows. N-terminal autoinhibitory domain interacts with the C-terminal kinase domain, inhibiting kinase activity, and preventing interaction with its substrate, MAP2K6. The GADD45 proteins activate the kinase by binding to the N-terminal domain. Activated by phosphorylation on Thr-1494. Functionally, component of a protein kinase signal transduction cascade. Activates the CSBP2, P38 and JNK MAPK pathways, but not the ERK pathway. Specifically phosphorylates and activates MAP2K4 and MAP2K6. This Mus musculus (Mouse) protein is Mitogen-activated protein kinase kinase kinase 4 (Map3k4).